The following is a 432-amino-acid chain: Asparagine--tRNA ligase (432 aa).

Belongs to the class-II aminoacyl-tRNA synthetase family. Homodimer.

It localises to the cytoplasm. The enzyme catalyses tRNA(Asn) + L-asparagine + ATP = L-asparaginyl-tRNA(Asn) + AMP + diphosphate + H(+). The sequence is that of Asparagine--tRNA ligase from Lactobacillus gasseri (strain ATCC 33323 / DSM 20243 / BCRC 14619 / CIP 102991 / JCM 1131 / KCTC 3163 / NCIMB 11718 / NCTC 13722 / AM63).